Here is a 61-residue protein sequence, read N- to C-terminus: MAKKALVNKANKKPKFKVRGYTRCQRCGRPHAVFRKFGLCRICLREMAHAGELPGVQKSSW.

Zn(2+) contacts are provided by C24, C27, C40, and C43.

This sequence belongs to the universal ribosomal protein uS14 family. Zinc-binding uS14 subfamily. In terms of assembly, part of the 30S ribosomal subunit. Contacts proteins S3 and S10. Requires Zn(2+) as cofactor.

In terms of biological role, binds 16S rRNA, required for the assembly of 30S particles and may also be responsible for determining the conformation of the 16S rRNA at the A site. This is Small ribosomal subunit protein uS14 from Mycobacterium sp. (strain JLS).